The primary structure comprises 211 residues: Uracil phosphoribosyltransferase (211 aa).

Residues R78, R103, and 130–138 each bind 5-phospho-alpha-D-ribose 1-diphosphate; that span reads DPMLATGGS. Uracil contacts are provided by residues I193 and 198-200; that span reads GDA. Position 199 (D199) interacts with 5-phospho-alpha-D-ribose 1-diphosphate.

The protein belongs to the UPRTase family. It depends on Mg(2+) as a cofactor.

It carries out the reaction UMP + diphosphate = 5-phospho-alpha-D-ribose 1-diphosphate + uracil. The protein operates within pyrimidine metabolism; UMP biosynthesis via salvage pathway; UMP from uracil: step 1/1. Its activity is regulated as follows. Allosterically activated by GTP. Functionally, catalyzes the conversion of uracil and 5-phospho-alpha-D-ribose 1-diphosphate (PRPP) to UMP and diphosphate. The sequence is that of Uracil phosphoribosyltransferase from Hahella chejuensis (strain KCTC 2396).